The sequence spans 194 residues: 3-isopropylmalate dehydratase small subunit (194 aa).

The protein belongs to the LeuD family. LeuD type 1 subfamily. In terms of assembly, heterodimer of LeuC and LeuD.

It carries out the reaction (2R,3S)-3-isopropylmalate = (2S)-2-isopropylmalate. Its pathway is amino-acid biosynthesis; L-leucine biosynthesis; L-leucine from 3-methyl-2-oxobutanoate: step 2/4. Functionally, catalyzes the isomerization between 2-isopropylmalate and 3-isopropylmalate, via the formation of 2-isopropylmaleate. This chain is 3-isopropylmalate dehydratase small subunit, found in Leuconostoc mesenteroides subsp. mesenteroides (strain ATCC 8293 / DSM 20343 / BCRC 11652 / CCM 1803 / JCM 6124 / NCDO 523 / NBRC 100496 / NCIMB 8023 / NCTC 12954 / NRRL B-1118 / 37Y).